A 926-amino-acid polypeptide reads, in one-letter code: Centrosomal protein of 104 kDa (926 aa).

Residues 212–279 (EVAQIIRRLD…DLAKEKKQQM (68 aa)) are a coiled coil. The disordered stretch occupies residues 345-419 (LQEKPSASSP…RGVAGEPEPL (75 aa)). The segment covering 398 to 409 (AEVKEADSDVRR) has biased composition (basic and acidic residues). HEAT repeat units lie at residues 522–558 (THCV…ALFK) and 603–639 (GFTV…YRQH). Residues 678–730 (EAEVRAQKRVATKEAEKQKKEEMKALQGQSGELRETQAGVQEKESEAVKLRNQ) are a coiled coil. Composition is skewed to basic and acidic residues over residues 690-701 (KEAEKQKKEEMK) and 718-729 (QEKESEAVKLRN). 2 disordered regions span residues 690 to 741 (KEAE…VLPD) and 885 to 926 (APQQ…YMRR). Low complexity predominate over residues 889-903 (GKGPAAAKSSTSAPK). Residues 916–926 (SKSSSRTYMRR) are compositionally biased toward polar residues.

In terms of assembly, interacts with CCP110 and CEP97. Interacts with ARMC9, TOGARAM1, CCDC66 and CSPP1.

The protein localises to the cell projection. It localises to the cilium. It is found in the cytoplasm. Its subcellular location is the cytoskeleton. The protein resides in the microtubule organizing center. The protein localises to the centrosome. It localises to the centriole. It is found in the spindle pole. In terms of biological role, required for ciliogenesis and for structural integrity at the ciliary tip. The protein is Centrosomal protein of 104 kDa (Cep104) of Mus musculus (Mouse).